The primary structure comprises 1284 residues: ATP-dependent helicase fft2 (1284 aa).

Composition is skewed to polar residues over residues 1–10 (MLPYNSNYLS) and 20–57 (ENPQ…AMYG). Disordered regions lie at residues 1-57 (MLPY…AMYG), 185-252 (AQPP…LPPV), 317-339 (KQSP…QSQK), 353-388 (STQA…EEPE), and 446-465 (PDDV…KNPM). Residues 201–241 (RSNSRSSARSTARSAPRSTQRSRSSSANPVTTPPVNNTLLT) are compositionally biased toward low complexity. Composition is skewed to polar residues over residues 320–339 (PVAS…QSQK) and 353–372 (STQA…ASKK). Ser-323 bears the Phosphoserine mark. Residues 376-388 (EEDEFYDSEEEPE) are compositionally biased toward acidic residues. Residue Ser-383 is modified to Phosphoserine. One can recognise a Helicase ATP-binding domain in the interval 562–730 (HLLYQQKLSG…VSLLAFILPN (169 aa)). 575 to 582 (DEMGLGKT) provides a ligand contact to ATP. A DEGH box motif is present at residues 681 to 684 (DEGH). Residues 816 to 839 (QQLRRDDKRNKRSKNDEESDGKSL) form a disordered region. Over residues 818 to 831 (LRRDDKRNKRSKND) the composition is skewed to basic and acidic residues. In terms of domain architecture, Helicase C-terminal spans 928 to 1079 (VLKELLPKMK…SLSSDGKDRE (152 aa)). Positions 1088–1284 (DMLDEENNGN…SEVDNNAAKD (197 aa)) are disordered. The segment covering 1095 to 1107 (NGNNTKPEITGNE) has biased composition (polar residues). Over residues 1143 to 1177 (EKTDLADGDEKANIKTEMKSETVEGDNKELRETMK) the composition is skewed to basic and acidic residues. Over residues 1180–1194 (NVQTDSNAAVPSSKS) the composition is skewed to polar residues. Basic and acidic residues-rich tracts occupy residues 1243–1256 (QLEK…KKPD) and 1266–1284 (EEEK…AAKD).

The protein belongs to the SNF2/RAD54 helicase family.

It localises to the cytoplasm. Its subcellular location is the nucleus. The catalysed reaction is ATP + H2O = ADP + phosphate + H(+). Functionally, DNA helicase that possesses intrinsic ATP-dependent nucleosome-remodeling activity and is required for heterochromatin organization. This is ATP-dependent helicase fft2 (fft2) from Schizosaccharomyces pombe (strain 972 / ATCC 24843) (Fission yeast).